Reading from the N-terminus, the 139-residue chain is D-ribose pyranase (139 aa).

His-20 functions as the Proton donor in the catalytic mechanism. Substrate is bound by residues Asp-28, His-106, and Tyr-128 to Asn-130.

Belongs to the RbsD / FucU family. RbsD subfamily. As to quaternary structure, homodecamer.

The protein resides in the cytoplasm. The catalysed reaction is beta-D-ribopyranose = beta-D-ribofuranose. It functions in the pathway carbohydrate metabolism; D-ribose degradation; D-ribose 5-phosphate from beta-D-ribopyranose: step 1/2. Functionally, catalyzes the interconversion of beta-pyran and beta-furan forms of D-ribose. The chain is D-ribose pyranase from Salmonella agona (strain SL483).